We begin with the raw amino-acid sequence, 399 residues long: Rhodopsin, G0-coupled (399 aa).

At 1-17 the chain is on the extracellular side; the sequence is MPFPLNRTDTALVISPS. Asparagine 6 carries an N-linked (GlcNAc...) asparagine glycan. Residues 18–43 form a helical membrane-spanning segment; that stretch reads EFRIIGIFISICCIIGVLGNLLIIIV. The Cytoplasmic portion of the chain corresponds to 44 to 55; the sequence is FAKRRSVRRPIN. Residues 56–81 form a helical membrane-spanning segment; it reads FFVLNLAVSDLIVALLGYPMTAASAF. Over 82–95 the chain is Extracellular; that stretch reads SNRWIFDNIGCKIY. Cysteines 92 and 169 form a disulfide. A helical membrane pass occupies residues 96–115; that stretch reads AFLCFNSGVISIMTHAALSF. The Cytoplasmic portion of the chain corresponds to 116–134; that stretch reads CRYIIICQYGYRKKITQTT. Residues 135–158 traverse the membrane as a helical segment; that stretch reads VLRTLFSIWSFAMFWTLSPLFGWS. Residues 159 to 182 lie on the Extracellular side of the membrane; it reads SYVIEVVPVSCSVNWYGHGLGDVS. A helical membrane pass occupies residues 183–210; it reads YTISVIVAVYVFPLSIIVFSYGMILQEK. The Cytoplasmic portion of the chain corresponds to 211–240; that stretch reads VCKDSRKNGIRAQQRYTPRFIQDIEQRVTF. Residues 241–263 form a helical membrane-spanning segment; that stretch reads ISFLMMAAFMVAWTPYAIMSALA. Topologically, residues 264–271 are extracellular; the sequence is IGSFNVEN. A helical membrane pass occupies residues 272–295; that stretch reads SFAALPTLFAKASCAYNPFIYAFT. Lysine 282 is modified (N6-(retinylidene)lysine). At 296 to 399 the chain is on the cytoplasmic side; sequence NANFRDTVVE…NTFTADFSVI (104 aa).

It belongs to the G-protein coupled receptor 1 family. Opsin subfamily. Post-translationally, phosphorylated on some or all of the serine and threonine residues present in the C-terminal region. Retina. Expressed in the hyperpolarizing cell layer of the photoreceptor cells with its photoreceptive region adjacent to the lens.

The protein localises to the membrane. Visual pigments are the light-absorbing molecules that mediate vision. They consist of an apoprotein, opsin, covalently linked to cis-retinal. This Mizuhopecten yessoensis (Japanese scallop) protein is Rhodopsin, G0-coupled (SCOP2).